Here is a 274-residue protein sequence, read N- to C-terminus: Putative 2-succinyl-6-hydroxy-2,4-cyclohexadiene-1-carboxylate synthase (274 aa).

An AB hydrolase-1 domain is found at 26 to 259; it reads AVVCLHGFTG…KAGHTVHVEQ (234 aa).

Belongs to the AB hydrolase superfamily. MenH family. As to quaternary structure, monomer.

It carries out the reaction 5-enolpyruvoyl-6-hydroxy-2-succinyl-cyclohex-3-ene-1-carboxylate = (1R,6R)-6-hydroxy-2-succinyl-cyclohexa-2,4-diene-1-carboxylate + pyruvate. Its pathway is quinol/quinone metabolism; 1,4-dihydroxy-2-naphthoate biosynthesis; 1,4-dihydroxy-2-naphthoate from chorismate: step 3/7. It participates in quinol/quinone metabolism; menaquinone biosynthesis. Catalyzes a proton abstraction reaction that results in 2,5-elimination of pyruvate from 2-succinyl-5-enolpyruvyl-6-hydroxy-3-cyclohexene-1-carboxylate (SEPHCHC) and the formation of 2-succinyl-6-hydroxy-2,4-cyclohexadiene-1-carboxylate (SHCHC). The protein is Putative 2-succinyl-6-hydroxy-2,4-cyclohexadiene-1-carboxylate synthase of Bacillus subtilis (strain 168).